We begin with the raw amino-acid sequence, 68 residues long: Small ribosomal subunit protein bS21 (68 aa).

Belongs to the bacterial ribosomal protein bS21 family.

The chain is Small ribosomal subunit protein bS21 from Paracoccus denitrificans (strain Pd 1222).